We begin with the raw amino-acid sequence, 479 residues long: Tegument protein VP16 homolog (479 aa).

It belongs to the herpesviridae tegument protein VP16 protein family. In terms of assembly, associates with the VP16-induced complex; binding to host HCFC1 activates VP16 for association with the octamer motif-binding host protein POU2F1, to form a multiprotein-DNA complex responsible for activating transcription of the viral immediate early genes.

Its subcellular location is the virion tegument. The protein localises to the host nucleus. In terms of biological role, transcriptional activator of immediate-early (IE) gene products (alpha genes). Acts as a key activator of lytic infection by initiating the lytic program through the assembly of the transcriptional regulatory VP16-induced complex composed of VP16 and two cellular factors, HCFC1 and POU2F1. VP16-induced complex represents a regulatory switch: when it is on, it promotes IE-gene expression and thus lytic infection, and when it is off, it limits IE-gene transcription favoring latent infection. Functionally, may play a role in the aggregation of tegument proteins around nucleocapsids during virus morphogenesis. The chain is Tegument protein VP16 homolog from Equus caballus (Horse).